The following is a 163-amino-acid chain: MPSFDVVNKIELQELDNAVNNVKKEIETRYDFRNTTTEIDLHKGDLRITVVAADEMKMRALEEMLHAHCVRRKIDPRCLEFKEIEATSRGAVKREVQVKEGIAKDVAQKIVKAIKDSKLKVQGAIQDQQVRVTGKKIDDLQDVIALLREGDFGIPLQFVNMKN.

It belongs to the YajQ family.

Its function is as follows. Nucleotide-binding protein. The polypeptide is Nucleotide-binding protein Dvul_1191 (Nitratidesulfovibrio vulgaris (strain DP4) (Desulfovibrio vulgaris)).